A 364-amino-acid chain; its full sequence is V-type proton ATPase subunit d (364 aa).

This sequence belongs to the V-ATPase V0D/AC39 subunit family. In terms of assembly, V-ATPase is a heteromultimeric enzyme composed of a peripheral catalytic V1 complex (components A to H) attached to an integral membrane V0 proton pore complex (components: a, c, c', c'', d, e, f and VOA1).

It is found in the vacuole membrane. In terms of biological role, subunit of the V0 complex of vacuolar(H+)-ATPase (V-ATPase), a multisubunit enzyme composed of a peripheral complex (V1) that hydrolyzes ATP and a membrane integral complex (V0) that translocates protons. V-ATPase is responsible for acidifying and maintaining the pH of intracellular compartments. This subunit is a non-integral membrane component of the membrane pore domain and is required for proper assembly of the V0 sector. Might be involved in the regulated assembly of V1 subunits onto the membrane sector or alternatively may prevent the passage of protons through V0 pores. This Neurospora crassa (strain ATCC 24698 / 74-OR23-1A / CBS 708.71 / DSM 1257 / FGSC 987) protein is V-type proton ATPase subunit d.